Consider the following 48-residue polypeptide: Sperm protamine P1 (48 aa).

This sequence belongs to the protamine P1 family. In terms of tissue distribution, testis.

The protein localises to the nucleus. The protein resides in the chromosome. In terms of biological role, protamines substitute for histones in the chromatin of sperm during the haploid phase of spermatogenesis. They compact sperm DNA into a highly condensed, stable and inactive complex. The polypeptide is Sperm protamine P1 (PRM1) (Murina cyclotis (Round-eared tube-nosed bat)).